The sequence spans 545 residues: Threonine--tRNA ligase catalytic subunit (545 aa).

The segment at 139–433 is catalytic; the sequence is DHRLIGEKLD…LLEHFKGKLP (295 aa). Zn(2+) is bound by residues Cys-231, His-282, and His-410.

The protein belongs to the class-II aminoacyl-tRNA synthetase family. Homodimer. Probably interacts with its editing subunit. Zn(2+) serves as cofactor.

It localises to the cytoplasm. It carries out the reaction tRNA(Thr) + L-threonine + ATP = L-threonyl-tRNA(Thr) + AMP + diphosphate + H(+). Its function is as follows. Catalyzes the attachment of threonine to tRNA(Thr) in a two-step reaction: L-threonine is first activated by ATP to form Thr-AMP and then transferred to the acceptor end of tRNA(Thr). Also activates L-serine and transfers it to tRNA(Thr) but cannot deacylate incorrectly charged amino acid; unlike most archaea the editing function is found in a freestanding protein. The protein is Threonine--tRNA ligase catalytic subunit of Saccharolobus islandicus (strain L.S.2.15 / Lassen #1) (Sulfolobus islandicus).